Consider the following 109-residue polypeptide: Parvalbumin beta-1 (109 aa).

Ser-2 bears the N-acetylserine mark. EF-hand domains lie at 39–74 and 78–109; these read KSHEEVKKAFFVIDQDQSGFIEEDELKLFLQTFGAG and LTAAETKAFLAAGDEDGDGMIGVDEFVTLVKA. Ca(2+)-binding residues include Asp-52, Asp-54, Ser-56, Phe-58, Glu-60, Glu-63, Asp-91, Asp-93, Asp-95, Met-97, and Glu-102.

This sequence belongs to the parvalbumin family.

In terms of biological role, in muscle, parvalbumin is thought to be involved in relaxation after contraction. It binds two calcium ions. This chain is Parvalbumin beta-1, found in Gadus chalcogrammus (Alaska pollock).